Reading from the N-terminus, the 385-residue chain is 8-amino-7-oxononanoate synthase (385 aa).

A substrate-binding site is contributed by R21. A pyridoxal 5'-phosphate-binding site is contributed by 108–109 (GF). H133 is a substrate binding site. The pyridoxal 5'-phosphate site is built by S179, H207, and T233. K236 is modified (N6-(pyridoxal phosphate)lysine). Substrate is bound at residue T352.

It belongs to the class-II pyridoxal-phosphate-dependent aminotransferase family. BioF subfamily. Homodimer. Pyridoxal 5'-phosphate is required as a cofactor.

The catalysed reaction is 6-carboxyhexanoyl-[ACP] + L-alanine + H(+) = (8S)-8-amino-7-oxononanoate + holo-[ACP] + CO2. Its pathway is cofactor biosynthesis; biotin biosynthesis. Functionally, catalyzes the decarboxylative condensation of pimeloyl-[acyl-carrier protein] and L-alanine to produce 8-amino-7-oxononanoate (AON), [acyl-carrier protein], and carbon dioxide. In Salmonella dublin (strain CT_02021853), this protein is 8-amino-7-oxononanoate synthase.